The chain runs to 392 residues: Iripin-1 (392 aa).

An N-terminal signal peptide occupies residues 1-16; sequence MKPLVPLLFLLVSCRA. N-linked (GlcNAc...) asparagine glycans are attached at residues N104, N196, and N265.

Belongs to the serpin family. In terms of assembly, interacts with human KLKB1. Interacts with human ST14. Interacts with human PLG (plasmin). In terms of tissue distribution, highly expressed in salivary gland. Expressed in midgut and ovary.

It localises to the secreted. Functionally, serine protease inhibitor that modulates blood feeding of ticks on vertebrate species. Modestly inhibits human trypsin, plasma kallikrein (KLKB1), matriptase (ST14) and plasmin (PLG) via a classic serpin inhibitory mechanism. Modestly reduces enzymatic activity of human alpha-chymotrypsin, coagulation factor Xa (F10), factor XIIa (F12), cathepsin G (CTSG), tPA/tissue-type plasminogen activator (PLAT) and uPA/urokinase-type plasminogen activator (PLAU). Probably acts as a substrate rather than an inhibitor for the human neutrophil elastase (ELANE) and thus reduces its enzymatic activity in in vitro assays. Decreases expression of adhesion molecules VCAM1 and CD99 on the surface of human cells. Increases the production of chemokines for neutrophils and monocytes, such as KC/CXCL1, MIP-2/CXCL2 and MIP-1/CCL2, and anti-inflammatory cytokine IL10 in mouse inflammation models. Reduces the recruitment of mouse neutrophils and monocytes to the site of inflammation. Decreases expression of CXCR2 on the surface of mouse neutrophils. Increases expression of integrin ITGAM/ITGB2 on the surface of mouse neutrophils. The protein is Iripin-1 of Ixodes ricinus (Common tick).